Consider the following 355-residue polypeptide: Anthranilate phosphoribosyltransferase (355 aa).

5-phospho-alpha-D-ribose 1-diphosphate-binding positions include Gly-99, 102-103, Thr-107, 109-112, 127-135, and Ser-139; these read GD, NIST, and KHGNRSVSS. Gly-99 is an anthranilate binding site. Mg(2+) is bound at residue Ser-111. Asn-130 is a binding site for anthranilate. Arg-185 is an anthranilate binding site. Mg(2+) is bound by residues Asp-243 and Glu-244.

It belongs to the anthranilate phosphoribosyltransferase family. In terms of assembly, homodimer. It depends on Mg(2+) as a cofactor.

The catalysed reaction is N-(5-phospho-beta-D-ribosyl)anthranilate + diphosphate = 5-phospho-alpha-D-ribose 1-diphosphate + anthranilate. The protein operates within amino-acid biosynthesis; L-tryptophan biosynthesis; L-tryptophan from chorismate: step 2/5. In terms of biological role, catalyzes the transfer of the phosphoribosyl group of 5-phosphorylribose-1-pyrophosphate (PRPP) to anthranilate to yield N-(5'-phosphoribosyl)-anthranilate (PRA). The protein is Anthranilate phosphoribosyltransferase of Pseudoalteromonas translucida (strain TAC 125).